We begin with the raw amino-acid sequence, 241 residues long: Ribonuclease PH (241 aa).

Phosphate is bound by residues R89 and 127–129 (GTR).

It belongs to the RNase PH family. In terms of assembly, homohexameric ring arranged as a trimer of dimers.

The enzyme catalyses tRNA(n+1) + phosphate = tRNA(n) + a ribonucleoside 5'-diphosphate. Functionally, phosphorolytic 3'-5' exoribonuclease that plays an important role in tRNA 3'-end maturation. Removes nucleotide residues following the 3'-CCA terminus of tRNAs; can also add nucleotides to the ends of RNA molecules by using nucleoside diphosphates as substrates, but this may not be physiologically important. Probably plays a role in initiation of 16S rRNA degradation (leading to ribosome degradation) during starvation. This chain is Ribonuclease PH, found in Xylella fastidiosa (strain 9a5c).